The primary structure comprises 210 residues: Putative 3-methyladenine DNA glycosylase (210 aa).

The protein belongs to the DNA glycosylase MPG family.

The chain is Putative 3-methyladenine DNA glycosylase from Lactobacillus acidophilus (strain ATCC 700396 / NCK56 / N2 / NCFM).